A 133-amino-acid polypeptide reads, in one-letter code: Large ribosomal subunit protein eL32 (133 aa).

Belongs to the eukaryotic ribosomal protein eL32 family.

The sequence is that of Large ribosomal subunit protein eL32 (rpl32) from Dictyostelium discoideum (Social amoeba).